The sequence spans 265 residues: Transcription factor Spi-B-like (265 aa).

Positions 1–31 are TAD1 (Acidic); it reads MLTLEASQLDGPHPSYMFSDSSFYDLDSCKP. The interval 42 to 63 is TAD2; sequence AEPPTDPCAGWLELAEPGYEPF. A disordered region spans residues 127–160; it reads TPLSEDDDFPTDAPALEVSDSDSDENLSPGGSLD. A DNA-binding region (ETS) is located at residues 169 to 252; that stretch reads LRLYQFLLGL…VKKKLTYQFG (84 aa).

The protein belongs to the ETS family.

It is found in the nucleus. Its function is as follows. May act as a sequence specific transcriptional activator. This Paleosuchus palpebrosus (Cuvier's smooth-fronted caiman) protein is Transcription factor Spi-B-like.